The sequence spans 260 residues: Thaumatin-like protein 1 (260 aa).

A signal peptide spans 1–32 (MIITVLHSHVSFYFIILSFLFFHALHLVGSDG). Cystine bridges form between Cys41–Cys255, Cys89–Cys100, Cys105–Cys112, Cys166–Cys245, Cys171–Cys228, Cys179–Cys191, Cys195–Cys204, and Cys205–Cys215.

The protein belongs to the thaumatin family. In terms of tissue distribution, expressed only in roots.

Functionally, involved in local responses of roots to colonization by non-pathogenic plant growth-promoting rhizobacteria (PGPR) fluorescent Pseudomonas spp., but seems to not being required for the establishment of subsequent induced systemic resistance (ISR). The chain is Thaumatin-like protein 1 from Arabidopsis thaliana (Mouse-ear cress).